The chain runs to 46 residues: Defensin Tk-AMP-D6.1 (46 aa).

Disulfide bonds link Cys-3–Cys-46, Cys-14–Cys-34, Cys-20–Cys-40, and Cys-24–Cys-42.

Plant defense peptide. The sequence is that of Defensin Tk-AMP-D6.1 from Triticum kiharae (Wheat).